Reading from the N-terminus, the 142-residue chain is Large ribosomal subunit protein uL13 (142 aa).

This sequence belongs to the universal ribosomal protein uL13 family. As to quaternary structure, part of the 50S ribosomal subunit.

This protein is one of the early assembly proteins of the 50S ribosomal subunit, although it is not seen to bind rRNA by itself. It is important during the early stages of 50S assembly. The sequence is that of Large ribosomal subunit protein uL13 from Methanosphaera stadtmanae (strain ATCC 43021 / DSM 3091 / JCM 11832 / MCB-3).